We begin with the raw amino-acid sequence, 104 residues long: Large ribosomal subunit protein uL24 (104 aa).

It belongs to the universal ribosomal protein uL24 family. As to quaternary structure, part of the 50S ribosomal subunit.

One of two assembly initiator proteins, it binds directly to the 5'-end of the 23S rRNA, where it nucleates assembly of the 50S subunit. Functionally, one of the proteins that surrounds the polypeptide exit tunnel on the outside of the subunit. The protein is Large ribosomal subunit protein uL24 of Chromobacterium violaceum (strain ATCC 12472 / DSM 30191 / JCM 1249 / CCUG 213 / NBRC 12614 / NCIMB 9131 / NCTC 9757 / MK).